We begin with the raw amino-acid sequence, 50 residues long: U-megalopygitoxin(9)-Mo13 (50 aa).

The first 23 residues, 1-23 (MKLVFLFFIVAVMVSLFVGMTEA), serve as a signal peptide directing secretion. The cysteines at positions 33 and 40 are disulfide-linked.

Belongs to the caterpillar 9 family. Expressed by the venom apparatus.

It is found in the secreted. Functionally, probable toxin. In Megalopyge opercularis (Southern flannel moth), this protein is U-megalopygitoxin(9)-Mo13.